A 277-amino-acid chain; its full sequence is Large ribosomal subunit protein uL2cz/uL2cy (277 aa).

Disordered stretches follow at residues 1–31 (MAIHLYKTSTPSTRNGAVDSQAKSNTRNTRK) and 227–277 (NPVD…RRSK).

Belongs to the universal ribosomal protein uL2 family. In terms of assembly, part of the 50S ribosomal subunit.

It localises to the plastid. The protein resides in the chloroplast. This Manihot esculenta (Cassava) protein is Large ribosomal subunit protein uL2cz/uL2cy (rpl2-A).